The following is a 756-amino-acid chain: 1-phosphatidylinositol 4,5-bisphosphate phosphodiesterase delta-1 (756 aa).

The region spanning 21 to 130 is the PH domain; sequence ALLKGSQLLK…WVQGLRKIIH (110 aa). Positions 30–57 are substrate binding; sequence KVKSSSWRRERFYKLQEDCKTIWQESRK. EF-hand domains follow at residues 140–175 and 176–211; these read KLQH…LNIQ and VDDG…LTQR. The Ca(2+) site is built by Asp-153, Asn-155, Asp-157, Lys-159, Glu-164, Asp-189, Ser-191, Thr-193, Ser-195, and Glu-200. O-linked (GlcNAc) serine glycosylation occurs at Ser-191. Thr-193 is a glycosylation site (O-linked (GlcNAc) threonine). The PI-PLC X-box domain maps to 296-440; that stretch reads QDMDQPLSHY…LKGKILLKGK (145 aa). Residue His-311 is part of the active site. The Ca(2+) site is built by Asn-312, Glu-341, and Asp-343. The active site involves His-356. A Ca(2+)-binding site is contributed by Glu-390. Substrate-binding residues include Lys-438 and Lys-440. Thr-457 is modified (phosphothreonine). Residue Ser-460 is modified to Phosphoserine. The 118-residue stretch at 492 to 609 folds into the PI-PLC Y-box domain; that stretch reads LSDMIIYCKS…GYVLKPAFLR (118 aa). Substrate is bound by residues Ser-522 and Arg-549. The 129-residue stretch at 609-737 folds into the C2 domain; it reads RDPNTTFNSR…QGYRHVHLLS (129 aa). Ca(2+)-binding residues include Ile-651, Asp-653, Asn-677, Asp-706, Tyr-707, and Asp-708.

As to quaternary structure, interacts with TGM2. Ca(2+) serves as cofactor.

The catalysed reaction is a 1,2-diacyl-sn-glycero-3-phospho-(1D-myo-inositol-4,5-bisphosphate) + H2O = 1D-myo-inositol 1,4,5-trisphosphate + a 1,2-diacyl-sn-glycerol + H(+). The enzyme catalyses a 1,2-diacyl-sn-glycero-3-phospho-(1D-myo-inositol) + H2O = 1D-myo-inositol 1-phosphate + a 1,2-diacyl-sn-glycerol + H(+). The production of the second messenger molecules diacylglycerol (DAG) and inositol 1,4,5-trisphosphate (IP3) is mediated by activated phosphatidylinositol-specific phospholipase C enzymes. Essential for trophoblast and placental development. Binds phosphatidylinositol 4,5-bisphosphate. This Rattus norvegicus (Rat) protein is 1-phosphatidylinositol 4,5-bisphosphate phosphodiesterase delta-1.